The sequence spans 377 residues: UPF0754 membrane protein GTNG_0550 (377 aa).

2 helical membrane-spanning segments follow: residues 7-27 (LLFM…IAIV) and 357-377 (YLGA…GLWL).

It belongs to the UPF0754 family.

It localises to the cell membrane. In Geobacillus thermodenitrificans (strain NG80-2), this protein is UPF0754 membrane protein GTNG_0550.